Here is a 379-residue protein sequence, read N- to C-terminus: UDP-4-amino-4-deoxy-L-arabinose--oxoglutarate aminotransferase (379 aa).

Residue Lys-182 is modified to N6-(pyridoxal phosphate)lysine.

The protein belongs to the DegT/DnrJ/EryC1 family. ArnB subfamily. Homodimer. It depends on pyridoxal 5'-phosphate as a cofactor.

It catalyses the reaction UDP-4-amino-4-deoxy-beta-L-arabinose + 2-oxoglutarate = UDP-beta-L-threo-pentopyranos-4-ulose + L-glutamate. Its pathway is nucleotide-sugar biosynthesis; UDP-4-deoxy-4-formamido-beta-L-arabinose biosynthesis; UDP-4-deoxy-4-formamido-beta-L-arabinose from UDP-alpha-D-glucuronate: step 2/3. It functions in the pathway bacterial outer membrane biogenesis; lipopolysaccharide biosynthesis. Catalyzes the conversion of UDP-4-keto-arabinose (UDP-Ara4O) to UDP-4-amino-4-deoxy-L-arabinose (UDP-L-Ara4N). The modified arabinose is attached to lipid A and is required for resistance to polymyxin and cationic antimicrobial peptides. The polypeptide is UDP-4-amino-4-deoxy-L-arabinose--oxoglutarate aminotransferase (Shigella boydii serotype 4 (strain Sb227)).